Here is a 159-residue protein sequence, read N- to C-terminus: Protein-export protein SecB (159 aa).

This sequence belongs to the SecB family. Homotetramer, a dimer of dimers. One homotetramer interacts with 1 SecA dimer.

The protein localises to the cytoplasm. Functionally, one of the proteins required for the normal export of preproteins out of the cell cytoplasm. It is a molecular chaperone that binds to a subset of precursor proteins, maintaining them in a translocation-competent state. It also specifically binds to its receptor SecA. This Shewanella amazonensis (strain ATCC BAA-1098 / SB2B) protein is Protein-export protein SecB.